A 214-amino-acid polypeptide reads, in one-letter code: Histidine biosynthesis bifunctional protein HisIE (214 aa).

Residues 1–114 (MDLSAVRFDE…LEGEKDLGFV (114 aa)) form a phosphoribosyl-AMP cyclohydrolase region. The segment at 115–214 (VGQVYATIKE…RSPYDGSHGN (100 aa)) is phosphoribosyl-ATP pyrophosphohydrolase.

This sequence in the N-terminal section; belongs to the PRA-CH family. It in the C-terminal section; belongs to the PRA-PH family.

Its subcellular location is the cytoplasm. The enzyme catalyses 1-(5-phospho-beta-D-ribosyl)-ATP + H2O = 1-(5-phospho-beta-D-ribosyl)-5'-AMP + diphosphate + H(+). It carries out the reaction 1-(5-phospho-beta-D-ribosyl)-5'-AMP + H2O = 1-(5-phospho-beta-D-ribosyl)-5-[(5-phospho-beta-D-ribosylamino)methylideneamino]imidazole-4-carboxamide. Its pathway is amino-acid biosynthesis; L-histidine biosynthesis; L-histidine from 5-phospho-alpha-D-ribose 1-diphosphate: step 2/9. It participates in amino-acid biosynthesis; L-histidine biosynthesis; L-histidine from 5-phospho-alpha-D-ribose 1-diphosphate: step 3/9. The sequence is that of Histidine biosynthesis bifunctional protein HisIE from Thermus thermophilus (strain ATCC BAA-163 / DSM 7039 / HB27).